A 750-amino-acid polypeptide reads, in one-letter code: GRIP and coiled-coil domain-containing protein C27D7.02c (750 aa).

Disordered stretches follow at residues 14–53 (AQGQ…AKNM) and 188–280 (KTVE…RDIA). 2 stretches are compositionally biased toward basic and acidic residues: residues 18-34 (EEAK…DQLR) and 188-198 (KTVETKNDVPE). Residues 28-182 (QEEDQLRRNN…AQSIEQEVIS (155 aa)) adopt a coiled-coil conformation. Residues 201–213 (RPSTDTIGVSSAL) are compositionally biased toward polar residues. The stretch at 213 to 243 (LSKKKKKRNRKNQKKKSTKQNIEATTENDAL) forms a coiled coil. Basic residues predominate over residues 214 to 230 (SKKKKKRNRKNQKKKST). Residues 233-251 (NIEATTENDALSESISTPD) are compositionally biased toward polar residues. The segment covering 269–280 (ADSKEEERRDIA) has biased composition (basic and acidic residues). The stretch at 344–665 (KLVEELTKQL…YEHLQKSFKN (322 aa)) forms a coiled coil. Positions 672 to 703 (KQQPSNHGRNSSVSRSSSSVEVNSKHPGSDDM) are disordered. A compositionally biased stretch (low complexity) spans 676 to 693 (SNHGRNSSVSRSSSSVEV). The span at 694-703 (NSKHPGSDDM) shows a compositional bias: basic and acidic residues. Positions 700–748 (SDDMLIDKEYTRNILFQFLEQRDRRPEIVNLLSILLDLSEEQKQKLLSV) constitute a GRIP domain.

Its subcellular location is the cytoplasm. The sequence is that of GRIP and coiled-coil domain-containing protein C27D7.02c from Schizosaccharomyces pombe (strain 972 / ATCC 24843) (Fission yeast).